Here is a 111-residue protein sequence, read N- to C-terminus: WAP four-disulfide core domain protein 12 (111 aa).

The signal sequence occupies residues 1–23 (MGSSSFLVLMVSLTLVTLVAAEG). The WAP domain maps to 27-74 (GIEKAGVCPADNVRCFKSDPPQCHTDQDCLGERKCCYLHCGFKCVIPV). Disulfide bonds link Cys-34–Cys-62, Cys-41–Cys-66, Cys-49–Cys-61, and Cys-55–Cys-70. A disordered region spans residues 80–111 (GGNKDEDVSGPCPEPGWEAKSPGSSSTGCPQK). The segment covering 101-111 (PGSSSTGCPQK) has biased composition (polar residues).

The protein resides in the secreted. Functionally, antibacterial protein. Putative acid-stable proteinase inhibitor. The polypeptide is WAP four-disulfide core domain protein 12 (WFDC12) (Chlorocebus aethiops (Green monkey)).